Reading from the N-terminus, the 554-residue chain is Thermosome subunit alpha (554 aa).

Residues 530–554 (PKKKEKKGKTGEEEEEEGGGSKFEF) are disordered.

This sequence belongs to the TCP-1 chaperonin family. Forms a Heterooligomeric complex of two stacked eight-membered rings.

Molecular chaperone; binds unfolded polypeptides in vitro, and has a weak ATPase activity. This is Thermosome subunit alpha (thsA) from Aeropyrum pernix (strain ATCC 700893 / DSM 11879 / JCM 9820 / NBRC 100138 / K1).